We begin with the raw amino-acid sequence, 305 residues long: rRNA 2'-O-methyltransferase fibrillarin (305 aa).

The tract at residues 1–70 (MAYTPGSRGG…SGGRGGAKGG (70 aa)) is disordered. Residues 7 to 69 (SRGGRGGSRG…SSGGRGGAKG (63 aa)) show a composition bias toward gly residues. Ser111 and Ser114 each carry phosphoserine. Residues 160–161 (TS), 179–180 (EF), 204–205 (DA), and 224–227 (DVAQ) contribute to the S-adenosyl-L-methionine site.

Belongs to the methyltransferase superfamily. Fibrillarin family. As to quaternary structure, component of box C/D small nucleolar ribonucleoprotein (snoRNP) particles. Post-translationally, by homology to other fibrillarins, some or all of the N-terminal domain arginines are modified to asymmetric dimethylarginine (DMA).

It is found in the nucleus. It localises to the nucleolus. It catalyses the reaction L-glutaminyl-[histone H2A] + S-adenosyl-L-methionine = N(5)-methyl-L-glutaminyl-[histone H2A] + S-adenosyl-L-homocysteine + H(+). In terms of biological role, S-adenosyl-L-methionine-dependent methyltransferase that has the ability to methylate both RNAs and proteins. Involved in pre-rRNA processing by catalyzing the site-specific 2'-hydroxyl methylation of ribose moieties in pre-ribosomal RNA. Site specificity is provided by a guide RNA that base pairs with the substrate. Methylation occurs at a characteristic distance from the sequence involved in base pairing with the guide RNA. Also acts as a protein methyltransferase by mediating methylation of 'Gln-105' of histone H2A (H2AQ105me), a modification that impairs binding of the FACT complex and is specifically present at 35S ribosomal DNA locus. In Schizosaccharomyces pombe (strain 972 / ATCC 24843) (Fission yeast), this protein is rRNA 2'-O-methyltransferase fibrillarin (fib1).